Consider the following 282-residue polypeptide: ATP phosphoribosyltransferase (282 aa).

Belongs to the ATP phosphoribosyltransferase family. Long subfamily. It depends on Mg(2+) as a cofactor.

The protein resides in the cytoplasm. It catalyses the reaction 1-(5-phospho-beta-D-ribosyl)-ATP + diphosphate = 5-phospho-alpha-D-ribose 1-diphosphate + ATP. It functions in the pathway amino-acid biosynthesis; L-histidine biosynthesis; L-histidine from 5-phospho-alpha-D-ribose 1-diphosphate: step 1/9. With respect to regulation, feedback inhibited by histidine. In terms of biological role, catalyzes the condensation of ATP and 5-phosphoribose 1-diphosphate to form N'-(5'-phosphoribosyl)-ATP (PR-ATP). Has a crucial role in the pathway because the rate of histidine biosynthesis seems to be controlled primarily by regulation of HisG enzymatic activity. The chain is ATP phosphoribosyltransferase from Halobacterium salinarum (strain ATCC 29341 / DSM 671 / R1).